The sequence spans 257 residues: MVLIRVLANLLILQLSYAQKSSELIIGGDECNINEHPFLVLVYYDDYQCGGTLINEEWVLTAAHCNGENMEIYLGMHSKKVPNKDRRRRVPKEKFFCDSSKNYTKWNKDIMLIRLNRPVRKSAHIAPLSLPSSPPSVGSVCRIMGWGTISPTKVTLPDVPRCANINLLDYEVCRAAYAGLPATSRTLCAGILEGGKDSCGGDSGGPLICNGQFQGIVSWGGDPCAQPHEPGLYTNVFDHLDWIKGIIAGNTDATCPP.

Residues 1 to 18 form the signal peptide; that stretch reads MVLIRVLANLLILQLSYA. Positions 19-24 are excised as a propeptide; the sequence is QKSSEL. Residues 25-248 enclose the Peptidase S1 domain; the sequence is IIGGDECNIN…HLDWIKGIIA (224 aa). 6 disulfides stabilise this stretch: Cys31-Cys162, Cys49-Cys65, Cys97-Cys255, Cys141-Cys209, Cys173-Cys188, and Cys199-Cys224. His64 acts as the Charge relay system in catalysis. A glycan (N-linked (GlcNAc...) asparagine) is linked at Asn102. The Charge relay system role is filled by Asp109. Ser203 acts as the Charge relay system in catalysis.

It belongs to the peptidase S1 family. Snake venom subfamily. Monomer. As to expression, expressed by the venom gland.

It localises to the secreted. Functionally, snake venom serine protease with strong beta-fibrinogenolytic activities, angiotensin I (AGT)-degrading activities and strong kallikrein-like activities in vitro, releasing bradykinin from kininogen (KNG1). Intravenous injection mildly lowers blood pressure in experimental rats, which may be explained by the action on angiotensin I and kininogen. Exhibits amidase activity against N-benzoyl-Pro-Phe-Arg-p-nitroanilide in vitro. The polypeptide is Beta-fibrinogenase mucrofibrase-5 (Protobothrops mucrosquamatus (Taiwan habu)).